The sequence spans 422 residues: Mitogen-activated protein kinase spm1 (422 aa).

In terms of domain architecture, Protein kinase spans 21-314; the sequence is FKVVKELGQG…VDDALEHPYL (294 aa). ATP is bound by residues 27-35 and lysine 52; that span reads LGQGAYGIV. The active-site Proton acceptor is aspartate 149. Threonine 186 bears the Phosphothreonine mark. The TXY motif lies at 186 to 188; sequence TEY. Tyrosine 188 carries the post-translational modification Phosphotyrosine. Residues 359 to 422 are disordered; that stretch reads RRRSHPTNPT…DHKSDDNRHN (64 aa). The span at 364–379 shows a compositional bias: polar residues; the sequence is PTNPTVNIPQPAQTVP. Over residues 380 to 397 the composition is skewed to low complexity; it reads SNDNGSFNVSSSSSSQTS. Basic and acidic residues predominate over residues 411-422; sequence AIDHKSDDNRHN.

It belongs to the protein kinase superfamily. CMGC Ser/Thr protein kinase family. MAP kinase subfamily. Mg(2+) is required as a cofactor. Dually phosphorylated on Thr-186 and Tyr-188, which activates the enzyme.

It carries out the reaction L-seryl-[protein] + ATP = O-phospho-L-seryl-[protein] + ADP + H(+). It catalyses the reaction L-threonyl-[protein] + ATP = O-phospho-L-threonyl-[protein] + ADP + H(+). Its activity is regulated as follows. Activated by tyrosine and threonine phosphorylation by skh1/pek1. Its function is as follows. Regulates cell integrity and functions coordinately with the protein kinase C pathway (pck1 and pck2). Involved the regulation of wall architecture, cell shape, cytokinesis in exponential and stationary phase, and metabolism of ions. The chain is Mitogen-activated protein kinase spm1 (spm1) from Schizosaccharomyces pombe (strain 972 / ATCC 24843) (Fission yeast).